The sequence spans 489 residues: Cytochrome P450 monooxygenase bfoB (489 aa).

Positions 1–18 (MLALYLIAGLLVGLLVYR) are cleaved as a signal peptide. N-linked (GlcNAc...) asparagine glycosylation is found at Asn113, Asn348, and Asn386. Cys429 is a heme binding site.

This sequence belongs to the cytochrome P450 family. The cofactor is heme.

It catalyses the reaction 2 fonsecin B + NADPH + O2 + H(+) = bifonsecin B + NADP(+) + 2 H2O. It carries out the reaction 2 rubrofusarin B + NADPH + O2 + 3 H(+) = nigerone + NADP(+) + 2 H2O. Its pathway is secondary metabolite biosynthesis. Cytochrome P450 monooxygenase; part of the gene cluster that mediates the biosynthesis of bifonsecin B, a dimeric gamma-naphthopyrone. The first step in the biosynthesis of bifonsecin B is the production of gamma-naphthopyrone precursor YWA1 by the non-reducing polyketide synthase albA, via condensation of one acetyl-CoA starter unit with 6 malonyl-CoA units. YWA1 is then methylated by bfoE at position C-6 to yield foncesin which is further methylated at position C-8 by bfoD to produce fonsecin B. A key enzyme in the biosynthetic pathway is the cytochrome P450 monooxygenase bfoB which catalyzes the oxidative dimerization of fonsecin B to bifonsecin B. Bfob also catalyzes the oxidative dimerization of rubrofusarin B into nigerone. The stereoselectivity of bfoB is influenced by the two natural monomeric substrates; homodimerization of fonsecin B yields a stereochemically pure biaryl, M-foncerine B, while rubrofusarin B yields a mixture of enantiomers M- and P-nigerone. This is Cytochrome P450 monooxygenase bfoB from Aspergillus brasiliensis (strain CBS 101740 / IMI 381727 / IBT 21946).